The primary structure comprises 219 residues: Transmembrane protein 179B (219 aa).

Transmembrane regions (helical) follow at residues valine 9–threonine 29, phenylalanine 65–isoleucine 85, glycine 96–valine 116, and threonine 167–tryptophan 187. The interval glutamate 198–serine 219 is disordered. A phosphoserine mark is found at serine 206 and serine 214.

It belongs to the TMEM179 family.

Its subcellular location is the membrane. The sequence is that of Transmembrane protein 179B (TMEM179B) from Homo sapiens (Human).